The following is a 152-amino-acid chain: Isoquinoline 1-oxidoreductase subunit alpha (152 aa).

Residues 1-77 enclose the 2Fe-2S ferredoxin-type domain; it reads MIEFILNGQP…RQSVTTIEGL (77 aa). Residues Cys39, Cys44, and Cys47 each coordinate [2Fe-2S] cluster.

As to quaternary structure, heterodimer of an alpha chain and a beta chain.

It catalyses the reaction isoquinoline + A + H2O = isoquinolin-1(2H)-one + AH2. In terms of biological role, specific towards N-containing N-heterocyclic substrates, including isoquinoline, isoquinolin-5-ol, phthalazine and quinazoline. The sequence is that of Isoquinoline 1-oxidoreductase subunit alpha (iorA) from Brevundimonas diminuta (Pseudomonas diminuta).